The chain runs to 909 residues: Phosphoenolpyruvate carboxylase (909 aa).

Catalysis depends on residues H151 and K578.

It belongs to the PEPCase type 1 family. It depends on Mg(2+) as a cofactor.

It catalyses the reaction oxaloacetate + phosphate = phosphoenolpyruvate + hydrogencarbonate. Functionally, forms oxaloacetate, a four-carbon dicarboxylic acid source for the tricarboxylic acid cycle. This is Phosphoenolpyruvate carboxylase from Caulobacter vibrioides (strain ATCC 19089 / CIP 103742 / CB 15) (Caulobacter crescentus).